Reading from the N-terminus, the 215-residue chain is Nucleoside triphosphate pyrophosphatase (215 aa).

Asp-77 (proton acceptor) is an active-site residue.

It belongs to the Maf family. It depends on a divalent metal cation as a cofactor.

The protein localises to the cytoplasm. It carries out the reaction a ribonucleoside 5'-triphosphate + H2O = a ribonucleoside 5'-phosphate + diphosphate + H(+). The enzyme catalyses a 2'-deoxyribonucleoside 5'-triphosphate + H2O = a 2'-deoxyribonucleoside 5'-phosphate + diphosphate + H(+). Functionally, nucleoside triphosphate pyrophosphatase. May have a dual role in cell division arrest and in preventing the incorporation of modified nucleotides into cellular nucleic acids. The protein is Nucleoside triphosphate pyrophosphatase of Rickettsia africae (strain ESF-5).